The chain runs to 466 residues: MSQKPFRVIIVGGSVTGLTLAHSLHRIGVDYIILEKRAKVVVQEGASIGILPNGARVLDQLGLYNTIEQSAAPPESSHIHFPDGFHFISPYPKRMFESFGYPIAFLERRRLLEILYDTLPDKTKLKVNKTVSDIEQYPEGGKYNARVRTIDGDVYEGDLVVGADGVHSRTRREMWRLSGSSPTGDVPVSERNSTSVEYCCVFGISQGLSGLRVGQQVMRIYNGRTLLVVPSKDELVFWFLSQKLDRKYEYSNAPRFTLEDAAAQCLQVADAPIADGIQFQDIWKTRQAFNMVSLEENLFKTWSFGPIVCIGDSMHKMTINFGQGANCAIEDVAVLSNLINELLLENKGMKPTFRDIEVLLRRFNRMHLSRVSDIFNMSWLVARVHAQDGLLRKIIGRYVMPYLGGRFDSRPFRMIADAAALDFLPLPRSSFPGWKMYKSREGGVVRNVFFLLAATVIVAWVCRLWA.

Residues 1-23 (MSQKPFRVIIVGGSVTGLTLAHS) form the signal peptide. Residues glutamate 35, glycine 49, and arginine 108 each coordinate FAD. N-linked (GlcNAc...) asparagine glycans are attached at residues asparagine 128 and asparagine 192. FAD contacts are provided by aspartate 312 and alanine 325. N-linked (GlcNAc...) asparagine glycosylation occurs at asparagine 376. The helical transmembrane segment at 443-465 (GVVRNVFFLLAATVIVAWVCRLW) threads the bilayer.

This sequence belongs to the paxM FAD-dependent monooxygenase family. The cofactor is FAD.

It is found in the membrane. It functions in the pathway secondary metabolite biosynthesis; terpenoid biosynthesis. In terms of biological role, FAD-dependent monooxygenase; part of the gene cluster that mediates the biosynthesis of diterpenoid pyrones. The first step of the pathway is the synthesis of the alpha-pyrone moiety by the polyketide synthase dpfgA via condensation of one acetyl-CoA starter unit with 3 malonyl-CoA units and 2 methylations. The alpha-pyrone is then combined with geranylgeranyl pyrophosphate (GGPP) formed by the GGPP synthase dpfgD through the action of the prenyltransferase dpfgC to yield a linear alpha-pyrone diterpenoid. Subsequent steps in the diterpenoid pyrone biosynthetic pathway involve the decalin core formation, which is initiated by the epoxidation of the C10-C11 olefin by the FAD-dependent oxidoreductase dpfgE, and is followed by a cyclization cascade catalyzed by the terpene cyclase dpfgB. The short chain dehydrogenase/reductase dpfgG then oxidizes the 8S hydroxy group to a ketone and the short chain dehydrogenase/reductase dpfgH reduces the ketone to the 8R hydroxy group to yield higginsianin B. Higginsianin B is further methylated by the methyltransferase dpfgI to produce the intermediate named FDDP B. The cytochrome P450 monooxygenase dfgpJ then catalyzes a three-step oxidation at C-27 to generate a carboxylic acid as well as C-26 hydroxylation. Finally, methyltransferase dpfgK methylates the carboxylic acid generated by dpfgJ, yielding the final diterpenoid pyrones from the pathway which were named FDDP D and FDDP E. The chain is FAD-dependent monooxygenase dpfgE from Gibberella zeae (strain ATCC MYA-4620 / CBS 123657 / FGSC 9075 / NRRL 31084 / PH-1) (Wheat head blight fungus).